A 435-amino-acid polypeptide reads, in one-letter code: Enolase (435 aa).

Residue Gln-167 participates in (2R)-2-phosphoglycerate binding. Catalysis depends on Glu-209, which acts as the Proton donor. Mg(2+) is bound by residues Asp-246, Glu-291, and Asp-318. Lys-343, Arg-372, Ser-373, and Lys-394 together coordinate (2R)-2-phosphoglycerate. Lys-343 functions as the Proton acceptor in the catalytic mechanism.

Belongs to the enolase family. In terms of assembly, component of the RNA degradosome, a multiprotein complex involved in RNA processing and mRNA degradation. Requires Mg(2+) as cofactor.

It is found in the cytoplasm. Its subcellular location is the secreted. It localises to the cell surface. The enzyme catalyses (2R)-2-phosphoglycerate = phosphoenolpyruvate + H2O. Its pathway is carbohydrate degradation; glycolysis; pyruvate from D-glyceraldehyde 3-phosphate: step 4/5. Catalyzes the reversible conversion of 2-phosphoglycerate (2-PG) into phosphoenolpyruvate (PEP). It is essential for the degradation of carbohydrates via glycolysis. The sequence is that of Enolase from Psychromonas ingrahamii (strain DSM 17664 / CCUG 51855 / 37).